The chain runs to 381 residues: 1-deoxy-D-xylulose 5-phosphate reductoisomerase (381 aa).

Positions 10, 11, 12, 13, 36, 37, 38, and 122 each coordinate NADPH. Lys123 provides a ligand contact to 1-deoxy-D-xylulose 5-phosphate. NADPH is bound at residue Glu124. Residue Asp148 coordinates Mn(2+). Residues Ser149, Glu150, Ser173, and His196 each coordinate 1-deoxy-D-xylulose 5-phosphate. A Mn(2+)-binding site is contributed by Glu150. Gly202 provides a ligand contact to NADPH. 1-deoxy-D-xylulose 5-phosphate contacts are provided by Ser209, Asn214, Lys215, and Glu218. Mn(2+) is bound at residue Glu218.

It belongs to the DXR family. It depends on Mg(2+) as a cofactor. The cofactor is Mn(2+).

The enzyme catalyses 2-C-methyl-D-erythritol 4-phosphate + NADP(+) = 1-deoxy-D-xylulose 5-phosphate + NADPH + H(+). Its pathway is isoprenoid biosynthesis; isopentenyl diphosphate biosynthesis via DXP pathway; isopentenyl diphosphate from 1-deoxy-D-xylulose 5-phosphate: step 1/6. Functionally, catalyzes the NADPH-dependent rearrangement and reduction of 1-deoxy-D-xylulose-5-phosphate (DXP) to 2-C-methyl-D-erythritol 4-phosphate (MEP). In Desulfitobacterium hafniense (strain Y51), this protein is 1-deoxy-D-xylulose 5-phosphate reductoisomerase.